We begin with the raw amino-acid sequence, 298 residues long: GTPase Era (298 aa).

In terms of domain architecture, Era-type G spans 3 to 170 (KSGFVAILGR…IKLLTDNLEE (168 aa)). A G1 region spans residues 11 to 18 (GRPNVGKS). Position 11–18 (11–18 (GRPNVGKS)) interacts with GTP. The interval 37–41 (QTTRN) is G2. Positions 58–61 (DTPG) are G3. Residues 58 to 62 (DTPGI) and 120 to 123 (NKID) contribute to the GTP site. The tract at residues 120-123 (NKID) is G4. The interval 149-151 (ISA) is G5. In terms of domain architecture, KH type-2 spans 201–279 (TQQEVPHSVA…YLETWVKVKK (79 aa)).

The protein belongs to the TRAFAC class TrmE-Era-EngA-EngB-Septin-like GTPase superfamily. Era GTPase family. As to quaternary structure, monomer.

It localises to the cytoplasm. It is found in the cell membrane. Functionally, an essential GTPase that binds both GDP and GTP, with rapid nucleotide exchange. Plays a role in 16S rRNA processing and 30S ribosomal subunit biogenesis and possibly also in cell cycle regulation and energy metabolism. This Streptococcus pyogenes serotype M4 (strain MGAS10750) protein is GTPase Era.